Reading from the N-terminus, the 509-residue chain is L-arabinose isomerase (509 aa).

Mn(2+)-binding residues include Glu313, Glu340, His357, and His456.

This sequence belongs to the arabinose isomerase family. Requires Mn(2+) as cofactor.

The catalysed reaction is beta-L-arabinopyranose = L-ribulose. It functions in the pathway carbohydrate degradation; L-arabinose degradation via L-ribulose; D-xylulose 5-phosphate from L-arabinose (bacterial route): step 1/3. Functionally, catalyzes the conversion of L-arabinose to L-ribulose. This is L-arabinose isomerase from Bacteroides thetaiotaomicron (strain ATCC 29148 / DSM 2079 / JCM 5827 / CCUG 10774 / NCTC 10582 / VPI-5482 / E50).